The sequence spans 573 residues: Septation ring formation regulator EzrA (573 aa).

The Extracellular segment spans residues Met1–Gln2. Residues Val3–Phe21 form a helical membrane-spanning segment. At Gln22–Ala573 the chain is on the cytoplasmic side. 3 coiled-coil regions span residues Asp100–Ala188, Leu317–Ala364, and Glu416–Glu488.

Belongs to the EzrA family.

It localises to the cell membrane. In terms of biological role, negative regulator of FtsZ ring formation; modulates the frequency and position of FtsZ ring formation. Inhibits FtsZ ring formation at polar sites. Interacts either with FtsZ or with one of its binding partners to promote depolymerization. This chain is Septation ring formation regulator EzrA, found in Lactiplantibacillus plantarum (strain ATCC BAA-793 / NCIMB 8826 / WCFS1) (Lactobacillus plantarum).